We begin with the raw amino-acid sequence, 101 residues long: Glutenin, high molecular weight subunit PC256 (101 aa).

The segment covering 1 to 27 has biased composition (polar residues); it reads EKLGQGQQPRQWLQPRQGQQGYYPTSP. The segment at 1–65 is disordered; that stretch reads EKLGQGQQPR…QGYDSPYHVS (65 aa). The segment covering 41-62 has biased composition (low complexity); that stretch reads QGYYPTSPQQSGQGQQGYDSPY.

It belongs to the gliadin/glutenin family. Disulfide-bridge linked aggregates.

Functionally, glutenins are high-molecular weight seed storage proteins of wheat endosperm. Thought to be responsible for the visco-elastic property of wheat dough. The polypeptide is Glutenin, high molecular weight subunit PC256 (Triticum aestivum (Wheat)).